The following is a 365-amino-acid chain: 3-dehydroquinate synthase (365 aa).

NAD(+) is bound by residues 106–110 (GVIGD), 130–131 (TT), K142, K151, and 169–172 (FFAT). Zn(2+)-binding residues include E184, H247, and H264.

The protein belongs to the sugar phosphate cyclases superfamily. Dehydroquinate synthase family. The cofactor is Co(2+). Zn(2+) serves as cofactor. It depends on NAD(+) as a cofactor.

It is found in the cytoplasm. It carries out the reaction 7-phospho-2-dehydro-3-deoxy-D-arabino-heptonate = 3-dehydroquinate + phosphate. It functions in the pathway metabolic intermediate biosynthesis; chorismate biosynthesis; chorismate from D-erythrose 4-phosphate and phosphoenolpyruvate: step 2/7. Its function is as follows. Catalyzes the conversion of 3-deoxy-D-arabino-heptulosonate 7-phosphate (DAHP) to dehydroquinate (DHQ). The chain is 3-dehydroquinate synthase from Listeria welshimeri serovar 6b (strain ATCC 35897 / DSM 20650 / CCUG 15529 / CIP 8149 / NCTC 11857 / SLCC 5334 / V8).